The primary structure comprises 477 residues: MAGTTQGAKTLYDKLWDDHLVSQRDDGSCLIYIDRHLLHEVTSPQAFEGLQLAGRQPWRLNANIATPDHNVPTSKKEREQGIAGIEDDTSRIQVQTLDDNCKTFNIVEFGINDIRQGIVHVVGPEQGLTLPGMTVVCGDSHTATHGAFGCLAHGIGTSEVEHVLATQCLIQKKSKNMLIRVDGQLGKGVTPKDVVLAIIGKIGTAGGTGYAIEFGGQVFRDMSIEGRMTVCNMAIEAGARVGMVAVDDKTIEYVQSRHYAPKGEQWDQAVAYWNTLHSDDDAVFDEVVVLNGAEIEPQVSWGTSPEMVIPVSQAVPTLEQAKDDVQRNDWTRAYQYMGLTAGQALADIQLDRVFIGSCTNSRIEDIRAAAEVVKGRKVASSIKQAMIVPGSGLVKQQAEQEGLDQVFLEAGFEWREPGCSMCLAMNSDKLQPGEHCASTSNRNFEGRQGNGGRTHLVSPAMAAAAAIAGHFVDVRSF.

[4Fe-4S] cluster-binding residues include Cys-358, Cys-419, and Cys-422.

The protein belongs to the aconitase/IPM isomerase family. LeuC type 1 subfamily. Heterodimer of LeuC and LeuD. It depends on [4Fe-4S] cluster as a cofactor.

It catalyses the reaction (2R,3S)-3-isopropylmalate = (2S)-2-isopropylmalate. The protein operates within amino-acid biosynthesis; L-leucine biosynthesis; L-leucine from 3-methyl-2-oxobutanoate: step 2/4. Catalyzes the isomerization between 2-isopropylmalate and 3-isopropylmalate, via the formation of 2-isopropylmaleate. The sequence is that of 3-isopropylmalate dehydratase large subunit from Acinetobacter baylyi (strain ATCC 33305 / BD413 / ADP1).